The following is a 334-amino-acid chain: Iron-uptake system permease protein FeuB (334 aa).

Transmembrane regions (helical) follow at residues isoleucine 9–glycine 29, alanine 63–isoleucine 83, proline 91–leucine 111, methionine 119–alanine 139, leucine 150–isoleucine 170, proline 191–leucine 211, valine 243–valine 263, proline 281–isoleucine 301, and phenylalanine 305–isoleucine 325.

The protein belongs to the binding-protein-dependent transport system permease family. FecCD subfamily. The complex is composed of one ATP-binding protein (YusV), two transmembrane proteins (FeuB and FeuC) and a solute-binding protein (FeuA).

Its subcellular location is the cell membrane. It is found in the membrane raft. Involved in the uptake of iron. Probably responsible for the translocation of the substrate across the membrane. In terms of biological role, part of the ABC transporter complex FeuABC/YusV involved in import of the catecholate siderophores bacillibactin and enterobactin. The polypeptide is Iron-uptake system permease protein FeuB (feuB) (Bacillus subtilis (strain 168)).